Consider the following 172-residue polypeptide: 3-hydroxydecanoyl-[acyl-carrier-protein] dehydratase (172 aa).

His71 is an active-site residue.

This sequence belongs to the thioester dehydratase family. FabA subfamily. As to quaternary structure, homodimer.

The protein resides in the cytoplasm. It carries out the reaction a (3R)-hydroxyacyl-[ACP] = a (2E)-enoyl-[ACP] + H2O. The catalysed reaction is (3R)-hydroxydecanoyl-[ACP] = (2E)-decenoyl-[ACP] + H2O. It catalyses the reaction (2E)-decenoyl-[ACP] = (3Z)-decenoyl-[ACP]. The protein operates within lipid metabolism; fatty acid biosynthesis. In terms of biological role, necessary for the introduction of cis unsaturation into fatty acids. Catalyzes the dehydration of (3R)-3-hydroxydecanoyl-ACP to E-(2)-decenoyl-ACP and then its isomerization to Z-(3)-decenoyl-ACP. Can catalyze the dehydratase reaction for beta-hydroxyacyl-ACPs with saturated chain lengths up to 16:0, being most active on intermediate chain length. This Enterobacter sp. (strain 638) protein is 3-hydroxydecanoyl-[acyl-carrier-protein] dehydratase.